Reading from the N-terminus, the 101-residue chain is Phosphoribosyl-AMP cyclohydrolase (101 aa).

A Mg(2+)-binding site is contributed by D71. A Zn(2+)-binding site is contributed by C72. Positions 73 and 75 each coordinate Mg(2+). Residues C88 and C95 each contribute to the Zn(2+) site.

Belongs to the PRA-CH family. In terms of assembly, homodimer. Mg(2+) is required as a cofactor. It depends on Zn(2+) as a cofactor.

It localises to the cytoplasm. It catalyses the reaction 1-(5-phospho-beta-D-ribosyl)-5'-AMP + H2O = 1-(5-phospho-beta-D-ribosyl)-5-[(5-phospho-beta-D-ribosylamino)methylideneamino]imidazole-4-carboxamide. Its pathway is amino-acid biosynthesis; L-histidine biosynthesis; L-histidine from 5-phospho-alpha-D-ribose 1-diphosphate: step 3/9. In terms of biological role, catalyzes the hydrolysis of the adenine ring of phosphoribosyl-AMP. The sequence is that of Phosphoribosyl-AMP cyclohydrolase from Bacillus cereus (strain Q1).